Consider the following 397-residue polypeptide: MVMFKKIKSFEVVFNDPEKVYGSGEKVAGRVIVEVCEVTRVKAVRILACGVAKVLWMQGSQQCKQTLDYLRYEDTLLLEEQPTAGENEMVIMRPGNKYEYKFGFELPQGPLGTSFKGKYGCVDYWVKAFLDRPSQPTQEAKKNFEVMDLVDVNTPDLMAPVSAKKEKKVSCMFIPDGRVSVSARIDRKGFCEGDDISIHADFENTCSRIVVPKAAIVARHTYLANGQTKVFTQKLSSVRGNHIISGTCASWRGKSLRVQKIRPSILGCNILKVEYSLLIYVSVPGSKKVILDLPLVIGSRSGLSSRTSSMASRTSSEMSWIDLNIPDTPEAPPCYMDIIPEDHRLESPTTPLLDDVDDSQDSPIFMYAPEFQFMPPPTYTEVDPCVLNNNNNNNNVQ.

K213 participates in a covalent cross-link: Glycyl lysine isopeptide (Lys-Gly) (interchain with G-Cter in ubiquitin). S362 is subject to Phosphoserine.

The protein belongs to the arrestin family. Homodimer; disulfide-linked. Interacts with TXN/thioredoxin through its redox-active site. Interacts with transcriptional repressors ZBTB16, ZBTB32 and HDAC1. Interacts with DDIT4. In terms of processing, ubiquitinated; undergoes heterotypic 'Lys-48'-/'Lys-63'-branched polyubiquitination catalyzed by ITCH and UBR5 resulting in proteasomal degradation. Deubiquitinated by USP5, leading to TXNIP stabilization. Ubiquitously expressed.

It localises to the cytoplasm. May act as an oxidative stress mediator by inhibiting thioredoxin activity or by limiting its bioavailability. Interacts with COPS5 and restores COPS5-induced suppression of CDKN1B stability, blocking the COPS5-mediated translocation of CDKN1B from the nucleus to the cytoplasm. Functions as a transcriptional repressor, possibly by acting as a bridge molecule between transcription factors and corepressor complexes, and over-expression will induce G0/G1 cell cycle arrest. Required for the maturation of natural killer cells. Acts as a suppressor of tumor cell growth. Inhibits the proteasomal degradation of DDIT4, and thereby contributes to the inhibition of the mammalian target of rapamycin complex 1 (mTORC1). In Mus musculus (Mouse), this protein is Thioredoxin-interacting protein (Txnip).